Here is a 731-residue protein sequence, read N- to C-terminus: Radial spoke head 10 homolog B (731 aa).

Positions 1 to 69 (MARGDNMKSS…PNENQPIGEH (69 aa)) are disordered. A compositionally biased stretch (polar residues) spans 7-17 (MKSSNKSTPEP). Low complexity-rich tracts occupy residues 18–36 (TLSKTLVESSTSSLLSESV) and 46–57 (SSSAVCSASTVS). MORN repeat units follow at residues 86–108 (YEGEKCGEMFHGEGVAYFQGGHV), 109–131 (YKGSFSHGLMHGYGEYIWSDGLK), 132–154 (YQGDFKVNVPMGHGTYTWLNGST), 155–177 (YEGEVHQGIRHGVGMYKCVKTLT), 179–201 (YRGQWYLGKRQGQGEMFYNQEAT), 204–226 (YKGEWVNNCREGWGKRCYPSGNV), 227–249 (YEGQWRNNVRHGEGTMRWIDLDQ), 251–273 (YSGQWINGIQEGKGTHTWFRKRA), 284–306 (YTGDFVQAMRHGQGQFLYASGAL), and 307–329 (YCGQWKYDKKHGQGRYIFENGRV). 2 disordered regions span residues 353–377 (TTPFPDENDSSKGASQSSSNASPLG) and 709–731 (KQEQDADGNELCPVTTTSVTSIH). The segment covering 363–377 (SKGASQSSSNASPLG) has biased composition (low complexity). A compositionally biased stretch (polar residues) spans 722–731 (VTTTSVTSIH).

It localises to the cytoplasm. The protein localises to the cytoskeleton. Its subcellular location is the cilium axoneme. It is found in the cell projection. The protein resides in the cilium. It localises to the flagellum. In terms of biological role, may function as part of axonemal radial spoke complexes. Radial spoke complexes are important for ciliary motility. This chain is Radial spoke head 10 homolog B (rsph10b), found in Danio rerio (Zebrafish).